The sequence spans 732 residues: Bromodomain-containing factor 1 (732 aa).

Over residues 1 to 22 (MSETFPETNTPVQTPSTESFVN) the composition is skewed to polar residues. Disordered regions lie at residues 1 to 207 (MSET…NLPE), 324 to 380 (TNVA…ETKP), 491 to 517 (NKPV…EDNV), 556 to 600 (REQQ…TPPQ), and 700 to 732 (VNGQ…SEEE). Over residues 37 to 51 (SQDSDSNQQSSHQEP) the composition is skewed to low complexity. Positions 89 to 100 (ASQTGVIQTEVS) are enriched in polar residues. Over residues 137 to 147 (EAPEENPQEEV) the composition is skewed to acidic residues. Positions 206 to 315 (PENPIPQHQA…AQFEKLMVKV (110 aa)) constitute a Bromo 1 domain. The span at 327 to 338 (AEATSVATSPTT) shows a compositional bias: polar residues. Residues 370–380 (KSKELPYETKP) are compositionally biased toward basic and acidic residues. In terms of domain architecture, Bromo 2 spans 383-492 (KKVAAELRFC…AVFDKKWANK (110 aa)). Residues 529–569 (AIQVMENQIIRMRKELDELKKEHLKKLREQQAARKKKKQQK) are a coiled coil. Residues 561–579 (ARKKKKQQKGKRRAPKAKH) show a composition bias toward basic residues. Residues 590–600 (PPEPPKLTPPQ) show a composition bias toward pro residues. Residues 593–672 (PPKLTPPQPV…GDKALKNSAG (80 aa)) enclose the NET domain. The segment covering 718-732 (ESSEDEASSESSEEE) has biased composition (acidic residues).

Belongs to the BET family.

It is found in the nucleus. In terms of biological role, transcription factor involved in the expression of a broad class of genes including snRNAs. Required for sporulation and DNA-damage repair. Prevents the spreading of SIR silencing at telomeres and protects histone H4, but not H3, from deacetylation. The sequence is that of Bromodomain-containing factor 1 (BDF1) from Candida albicans (strain SC5314 / ATCC MYA-2876) (Yeast).